Consider the following 280-residue polypeptide: Large ribosomal subunit protein uL2 (280 aa).

Disordered regions lie at residues 1–25 (MGIRKYRPMTPGTRQRSGADFAEVT) and 230–280 (HPHG…SGRG). A compositionally biased stretch (basic residues) spans 257–280 (KTRKRRKPSSKFIIRRRKTASGRG).

It belongs to the universal ribosomal protein uL2 family. As to quaternary structure, part of the 50S ribosomal subunit. Forms a bridge to the 30S subunit in the 70S ribosome.

Its function is as follows. One of the primary rRNA binding proteins. Required for association of the 30S and 50S subunits to form the 70S ribosome, for tRNA binding and peptide bond formation. It has been suggested to have peptidyltransferase activity; this is somewhat controversial. Makes several contacts with the 16S rRNA in the 70S ribosome. The sequence is that of Large ribosomal subunit protein uL2 from Gloeobacter violaceus (strain ATCC 29082 / PCC 7421).